A 334-amino-acid chain; its full sequence is Nucleoid-associated protein YPTS_1390 (334 aa).

The protein belongs to the YejK family.

It is found in the cytoplasm. The protein localises to the nucleoid. In Yersinia pseudotuberculosis serotype IB (strain PB1/+), this protein is Nucleoid-associated protein YPTS_1390.